The chain runs to 139 residues: D-ribose pyranase (139 aa).

His20 serves as the catalytic Proton donor. Substrate-binding positions include Asp28, His106, and 128-130; that span reads YAN.

This sequence belongs to the RbsD / FucU family. RbsD subfamily. In terms of assembly, homodecamer.

The protein resides in the cytoplasm. The enzyme catalyses beta-D-ribopyranose = beta-D-ribofuranose. The protein operates within carbohydrate metabolism; D-ribose degradation; D-ribose 5-phosphate from beta-D-ribopyranose: step 1/2. In terms of biological role, catalyzes the interconversion of beta-pyran and beta-furan forms of D-ribose. The protein is D-ribose pyranase of Escherichia coli O45:K1 (strain S88 / ExPEC).